We begin with the raw amino-acid sequence, 386 residues long: Synaptotagmin-5 (386 aa).

Positions 1 to 16 are enriched in pro residues; it reads MFPEPPTPGPPSPDTP. The segment at 1–23 is disordered; the sequence is MFPEPPTPGPPSPDTPPDSSRIS. Residues 1-24 lie on the Vesicular side of the membrane; it reads MFPEPPTPGPPSPDTPPDSSRISH. A helical transmembrane segment spans residues 25–45; that stretch reads GPVPPWALATIVLVSGLLIFS. The Cytoplasmic portion of the chain corresponds to 46–386; the sequence is CCFCLYRKSC…PDRVRLLPAP (341 aa). C2 domains are found at residues 108–227 and 239–372; these read ELGR…QAWR and KLGD…AQWH. Residues leucine 138, aspartate 139, aspartate 145, aspartate 197, phenylalanine 198, aspartate 199, serine 202, aspartate 205, aspartate 270, aspartate 276, aspartate 330, and aspartate 332 each coordinate Ca(2+).

Belongs to the synaptotagmin family. As to quaternary structure, homodimer. Interacts with both alpha- and beta-tubulin. Ca(2+) serves as cofactor.

It is found in the cytoplasmic vesicle. It localises to the secretory vesicle. Its subcellular location is the synaptic vesicle membrane. The protein resides in the recycling endosome membrane. Its function is as follows. May be involved in Ca(2+)-dependent exocytosis of secretory vesicles through Ca(2+) and phospholipid binding to the C2 domain or may serve as Ca(2+) sensors in the process of vesicular trafficking and exocytosis. Regulates the Ca(2+)-dependent secretion of norepinephrine in PC12 cells. Required for export from the endocytic recycling compartment to the cell surface. The polypeptide is Synaptotagmin-5 (SYT5) (Homo sapiens (Human)).